Reading from the N-terminus, the 269-residue chain is Formamidopyrimidine-DNA glycosylase (269 aa).

Residue P2 is the Schiff-base intermediate with DNA of the active site. The active-site Proton donor is the E3. K57 functions as the Proton donor; for beta-elimination activity in the catalytic mechanism. 3 residues coordinate DNA: H90, R109, and R150. The FPG-type zinc finger occupies 235 to 269; sequence NVYGRKGEPCEACGKAIESKVIGQRNTFFCTRCQR. R259 functions as the Proton donor; for delta-elimination activity in the catalytic mechanism.

The protein belongs to the FPG family. In terms of assembly, monomer. Zn(2+) is required as a cofactor.

The catalysed reaction is Hydrolysis of DNA containing ring-opened 7-methylguanine residues, releasing 2,6-diamino-4-hydroxy-5-(N-methyl)formamidopyrimidine.. The enzyme catalyses 2'-deoxyribonucleotide-(2'-deoxyribose 5'-phosphate)-2'-deoxyribonucleotide-DNA = a 3'-end 2'-deoxyribonucleotide-(2,3-dehydro-2,3-deoxyribose 5'-phosphate)-DNA + a 5'-end 5'-phospho-2'-deoxyribonucleoside-DNA + H(+). In terms of biological role, involved in base excision repair of DNA damaged by oxidation or by mutagenic agents. Acts as a DNA glycosylase that recognizes and removes damaged bases. Has a preference for oxidized purines, such as 7,8-dihydro-8-oxoguanine (8-oxoG). Has AP (apurinic/apyrimidinic) lyase activity and introduces nicks in the DNA strand. Cleaves the DNA backbone by beta-delta elimination to generate a single-strand break at the site of the removed base with both 3'- and 5'-phosphates. This chain is Formamidopyrimidine-DNA glycosylase, found in Alteromonas mediterranea (strain DSM 17117 / CIP 110805 / LMG 28347 / Deep ecotype).